Reading from the N-terminus, the 132-residue chain is Large ribosomal subunit protein bL12 (132 aa).

Belongs to the bacterial ribosomal protein bL12 family. In terms of assembly, homodimer. Part of the ribosomal stalk of the 50S ribosomal subunit. Forms a multimeric L10(L12)X complex, where L10 forms an elongated spine to which 2 to 4 L12 dimers bind in a sequential fashion. Binds GTP-bound translation factors.

Its function is as follows. Forms part of the ribosomal stalk which helps the ribosome interact with GTP-bound translation factors. Is thus essential for accurate translation. This is Large ribosomal subunit protein bL12 from Ehrlichia canis (strain Jake).